The chain runs to 262 residues: Shikimate dehydrogenase (NADP(+)) (262 aa).

Shikimate is bound by residues 15 to 17 (SRS) and Thr-62. Lys-66 serves as the catalytic Proton acceptor. Residue Glu-78 participates in NADP(+) binding. Asn-87 and Asp-102 together coordinate shikimate. Residues 126 to 130 (GAGGA), 150 to 155 (NRTLAR), and Met-214 contribute to the NADP(+) site. Shikimate is bound at residue Tyr-216. NADP(+) is bound at residue Gly-236.

This sequence belongs to the shikimate dehydrogenase family. Homodimer.

The enzyme catalyses shikimate + NADP(+) = 3-dehydroshikimate + NADPH + H(+). The protein operates within metabolic intermediate biosynthesis; chorismate biosynthesis; chorismate from D-erythrose 4-phosphate and phosphoenolpyruvate: step 4/7. In terms of biological role, involved in the biosynthesis of the chorismate, which leads to the biosynthesis of aromatic amino acids. Catalyzes the reversible NADPH linked reduction of 3-dehydroshikimate (DHSA) to yield shikimate (SA). In Acinetobacter baumannii (strain AB0057), this protein is Shikimate dehydrogenase (NADP(+)).